The primary structure comprises 132 residues: Small ribosomal subunit protein uS8 (132 aa).

This sequence belongs to the universal ribosomal protein uS8 family. Part of the 30S ribosomal subunit. Contacts proteins S5 and S12.

Functionally, one of the primary rRNA binding proteins, it binds directly to 16S rRNA central domain where it helps coordinate assembly of the platform of the 30S subunit. The polypeptide is Small ribosomal subunit protein uS8 (Bacillus cytotoxicus (strain DSM 22905 / CIP 110041 / 391-98 / NVH 391-98)).